A 476-amino-acid chain; its full sequence is uncharacterized protein (476 aa).

A signal peptide spans 1-24; it reads MIRKSATGVIVALAVIWGGGTWYT.

To E.coli YdgA and H.influenzae HI_1236.

This is an uncharacterized protein from Escherichia coli (strain K12).